The sequence spans 462 residues: Phosphoglucosamine mutase (462 aa).

Serine 112 functions as the Phosphoserine intermediate in the catalytic mechanism. Mg(2+)-binding residues include serine 112, aspartate 250, aspartate 252, and aspartate 254. Serine 112 is modified (phosphoserine).

The protein belongs to the phosphohexose mutase family. The cofactor is Mg(2+). Post-translationally, activated by phosphorylation.

The enzyme catalyses alpha-D-glucosamine 1-phosphate = D-glucosamine 6-phosphate. In terms of biological role, catalyzes the conversion of glucosamine-6-phosphate to glucosamine-1-phosphate. This is Phosphoglucosamine mutase from Parasynechococcus marenigrum (strain WH8102).